We begin with the raw amino-acid sequence, 137 residues long: Large ribosomal subunit protein uL13 (137 aa).

This sequence belongs to the universal ribosomal protein uL13 family. As to quaternary structure, part of the 50S ribosomal subunit.

Its function is as follows. This protein is one of the early assembly proteins of the 50S ribosomal subunit, although it is not seen to bind rRNA by itself. It is important during the early stages of 50S assembly. The protein is Large ribosomal subunit protein uL13 of Methanococcus maripaludis (strain DSM 14266 / JCM 13030 / NBRC 101832 / S2 / LL).